The primary structure comprises 202 residues: NADH-quinone oxidoreductase subunit C (202 aa).

The protein belongs to the complex I 30 kDa subunit family. In terms of assembly, NDH-1 is composed of 14 different subunits. Subunits NuoB, C, D, E, F, and G constitute the peripheral sector of the complex.

It localises to the cell inner membrane. The enzyme catalyses a quinone + NADH + 5 H(+)(in) = a quinol + NAD(+) + 4 H(+)(out). NDH-1 shuttles electrons from NADH, via FMN and iron-sulfur (Fe-S) centers, to quinones in the respiratory chain. The immediate electron acceptor for the enzyme in this species is believed to be ubiquinone. Couples the redox reaction to proton translocation (for every two electrons transferred, four hydrogen ions are translocated across the cytoplasmic membrane), and thus conserves the redox energy in a proton gradient. This chain is NADH-quinone oxidoreductase subunit C, found in Brucella canis (strain ATCC 23365 / NCTC 10854 / RM-666).